We begin with the raw amino-acid sequence, 93 residues long: Co-chaperonin GroES (93 aa).

Belongs to the GroES chaperonin family. In terms of assembly, heptamer of 7 subunits arranged in a ring. Interacts with the chaperonin GroEL.

It is found in the cytoplasm. In terms of biological role, together with the chaperonin GroEL, plays an essential role in assisting protein folding. The GroEL-GroES system forms a nano-cage that allows encapsulation of the non-native substrate proteins and provides a physical environment optimized to promote and accelerate protein folding. GroES binds to the apical surface of the GroEL ring, thereby capping the opening of the GroEL channel. The protein is Co-chaperonin GroES of Lacticaseibacillus paracasei (strain ATCC 334 / BCRC 17002 / CCUG 31169 / CIP 107868 / KCTC 3260 / NRRL B-441) (Lactobacillus paracasei).